The chain runs to 740 residues: Ethylene receptor 1 (740 aa).

The next 3 helical transmembrane spans lie at Ile-23–Val-43, Val-54–Trp-74, and Val-92–Leu-112. Cu cation contacts are provided by Cys-65 and His-69. The region spanning Asp-158–Leu-307 is the GAF domain. A Histidine kinase domain is found at Val-350 to Asp-588. His-353 carries the post-translational modification Phosphohistidine; by autocatalysis. Positions Lys-614–Ile-731 constitute a Response regulatory domain. Asp-662 is modified (4-aspartylphosphate).

This sequence belongs to the ethylene receptor family. Homodimer; disulfide-linked. Requires Cu cation as cofactor. In terms of processing, activation probably requires a transfer of a phosphate group between a His in the transmitter domain and an Asp of the receiver domain. In seeds and placenta.

Its subcellular location is the endoplasmic reticulum membrane. It carries out the reaction ATP + protein L-histidine = ADP + protein N-phospho-L-histidine.. Functionally, may act early in the ethylene signal transduction pathway, possibly as an ethylene receptor, or as a regulator of the pathway. The protein is Ethylene receptor 1 (ETR1) of Cucumis melo var. cantalupensis (Netted muskmelon).